A 471-amino-acid chain; its full sequence is Glutamate--tRNA ligase (471 aa).

The 'HIGH' region motif lies at 9–19; it reads PSPTGYLHVGG. Zn(2+) is bound by residues Cys98, Cys100, Cys125, and His127. A 'KMSKS' region motif is present at residues 237–241; sequence KLSKR. Position 240 (Lys240) interacts with ATP.

Belongs to the class-I aminoacyl-tRNA synthetase family. Glutamate--tRNA ligase type 1 subfamily. Monomer. The cofactor is Zn(2+).

Its subcellular location is the cytoplasm. It carries out the reaction tRNA(Glu) + L-glutamate + ATP = L-glutamyl-tRNA(Glu) + AMP + diphosphate. Catalyzes the attachment of glutamate to tRNA(Glu) in a two-step reaction: glutamate is first activated by ATP to form Glu-AMP and then transferred to the acceptor end of tRNA(Glu). In Shigella sonnei (strain Ss046), this protein is Glutamate--tRNA ligase.